Here is a 148-residue protein sequence, read N- to C-terminus: uncharacterized protein (148 aa).

One can recognise an HTH asnC-type domain in the interval Met4–Met65. A DNA-binding region (H-T-H motif) is located at residues Tyr23–Asp42.

This is an uncharacterized protein from Pyrococcus furiosus (strain ATCC 43587 / DSM 3638 / JCM 8422 / Vc1).